We begin with the raw amino-acid sequence, 40 residues long: SDPKIGNGCFGFPIDRIGSVSGLGCNRLVQNPPKPISGES.

Cysteine 9 and cysteine 25 form a disulfide bridge.

The protein belongs to the natriuretic peptide family. Expressed by the venom gland.

It is found in the secreted. Its function is as follows. Snake venom natriuretic peptide that exhibits vasoactive and hypotensive activity. Stimulates cGMP production through the natriuretic peptide receptor 1 (NPR1) with very high potencies for the rat NPR1 (EC(50)=18 nM), and very weak potencies over human NPR1 (30% activation at 10 uM). This Oxyuranus microlepidotus (Inland taipan) protein is Natriuretic peptide TNPd.